The primary structure comprises 340 residues: Annexin A2-B (340 aa).

The tract at residues 2–25 is P10 binding site; sequence ALIHEILGKLSLEGNQSSSRQSKL. Position 27 is a phosphoserine; by PKC (serine 27). Annexin repeat units follow at residues 34–105, 106–177, 190–262, and 266–337; these read FDAE…GLIK, TRPQ…ALAK, EKID…NLVQ, and NKPL…NLCG.

It belongs to the annexin family. Tetramer of 2 light chains (p10 proteins) and 2 heavy chains (p36 proteins). As to expression, adult brain, heart, striated muscle, liver, kidney, and very high levels in skin.

The protein resides in the secreted. The protein localises to the extracellular space. It localises to the extracellular matrix. It is found in the basement membrane. Calcium-regulated membrane-binding protein whose affinity for calcium is greatly enhanced by anionic phospholipids. It binds two calcium ions with high affinity. This chain is Annexin A2-B (anxa2-b), found in Xenopus laevis (African clawed frog).